The sequence spans 599 residues: UvrABC system protein C (599 aa).

In terms of domain architecture, GIY-YIG spans glutamine 18–isoleucine 96. The UVR domain occupies lysine 207–valine 242.

This sequence belongs to the UvrC family. Interacts with UvrB in an incision complex.

It localises to the cytoplasm. Its function is as follows. The UvrABC repair system catalyzes the recognition and processing of DNA lesions. UvrC both incises the 5' and 3' sides of the lesion. The N-terminal half is responsible for the 3' incision and the C-terminal half is responsible for the 5' incision. In Acinetobacter baylyi (strain ATCC 33305 / BD413 / ADP1), this protein is UvrABC system protein C.